Consider the following 622-residue polypeptide: MPKLEQRFDYVKIGLASPDRIRLWGERTLPNGQVVGEVTKPETINYRTLKPEMDGLFCERIFGPAKDWECHCGKYKRVRHRGIVCERCGVEVTESRVRRHRMGYIKLAAPVTHVWYLKGIPSYMATLLDMPLRDVEQIVYFNAYVVLNPGNHESLTYKQLLSEDQWIEIEDQIYSEDSQLVDIEVGIGAEAVQRLLQDLELETEAEALRSEIDVSKGQKRAKLIKRLRVIDNFIATGSRPDWMVLTVIPVIPPDLRPMVQLDGGRFATSDLNDLYRRVINRNNRLARLQEILAPEIIVRNEKRMLQEAVDALIDNGRRGRTVVGANNRPLKSLSDIIEGKQGRFRQNLLGKRVDYSGRSVIVVGPKLKMHQCGLPREMAIELFQPFVIHRLIRQGLVNNIKAAKRLIQRNDPIIWEVLEEVIDGHPVLLNRAPTLHRLGIQAFEPILVDGRAIQLHPLVCPAFNADFDGDQMAVHVPLSIESQAEARLLMLASNNILSPATGKPIVTPSQDMVLGCYYLTAENPKSQQGEGTYFASMNDVVMAYEQGQVELHAFIWVRYDGEVEDDDKGEPEIQTSGDGLVTHLYPSKRLRFDQDGKLISQYIRTTPGRIIYNKTIQESLAI.

The Zn(2+) site is built by C70, C72, C85, and C88. 3 residues coordinate Mg(2+): D466, D468, and D470.

The protein belongs to the RNA polymerase beta' chain family. RpoC1 subfamily. In terms of assembly, in cyanobacteria the RNAP catalytic core is composed of 2 alpha, 1 beta, 1 beta', 1 gamma and 1 omega subunit. When a sigma factor is associated with the core the holoenzyme is formed, which can initiate transcription. It depends on Mg(2+) as a cofactor. The cofactor is Zn(2+).

The catalysed reaction is RNA(n) + a ribonucleoside 5'-triphosphate = RNA(n+1) + diphosphate. Its function is as follows. DNA-dependent RNA polymerase catalyzes the transcription of DNA into RNA using the four ribonucleoside triphosphates as substrates. This is DNA-directed RNA polymerase subunit gamma from Cyanothece sp. (strain PCC 7425 / ATCC 29141).